The chain runs to 460 residues: tRNA(Ile)-lysidine synthase (460 aa).

ATP is bound at residue Ser-30 to Ser-35.

This sequence belongs to the tRNA(Ile)-lysidine synthase family.

The protein localises to the cytoplasm. The catalysed reaction is cytidine(34) in tRNA(Ile2) + L-lysine + ATP = lysidine(34) in tRNA(Ile2) + AMP + diphosphate + H(+). In terms of biological role, ligates lysine onto the cytidine present at position 34 of the AUA codon-specific tRNA(Ile) that contains the anticodon CAU, in an ATP-dependent manner. Cytidine is converted to lysidine, thus changing the amino acid specificity of the tRNA from methionine to isoleucine. The sequence is that of tRNA(Ile)-lysidine synthase from Yersinia pestis.